The sequence spans 429 residues: Serine--tRNA ligase (429 aa).

L-serine is bound at residue 235–237 (TAE). 266–268 (RSE) contacts ATP. Glutamate 289 is a binding site for L-serine. 353-356 (EISS) contributes to the ATP binding site. Residue serine 389 participates in L-serine binding.

It belongs to the class-II aminoacyl-tRNA synthetase family. Type-1 seryl-tRNA synthetase subfamily. As to quaternary structure, homodimer. The tRNA molecule binds across the dimer.

Its subcellular location is the cytoplasm. The enzyme catalyses tRNA(Ser) + L-serine + ATP = L-seryl-tRNA(Ser) + AMP + diphosphate + H(+). It catalyses the reaction tRNA(Sec) + L-serine + ATP = L-seryl-tRNA(Sec) + AMP + diphosphate + H(+). It functions in the pathway aminoacyl-tRNA biosynthesis; selenocysteinyl-tRNA(Sec) biosynthesis; L-seryl-tRNA(Sec) from L-serine and tRNA(Sec): step 1/1. In terms of biological role, catalyzes the attachment of serine to tRNA(Ser). Is also able to aminoacylate tRNA(Sec) with serine, to form the misacylated tRNA L-seryl-tRNA(Sec), which will be further converted into selenocysteinyl-tRNA(Sec). The chain is Serine--tRNA ligase from Actinobacillus succinogenes (strain ATCC 55618 / DSM 22257 / CCUG 43843 / 130Z).